Reading from the N-terminus, the 298-residue chain is Small ribosomal subunit protein uS2 (298 aa).

Basic and acidic residues-rich tracts occupy residues 237–259 (QSKE…DGQK) and 280–298 (PKSE…ENKG). A disordered region spans residues 237 to 298 (QSKELDDKAD…DAAKLPENKG (62 aa)).

This sequence belongs to the universal ribosomal protein uS2 family.

The polypeptide is Small ribosomal subunit protein uS2 (Neorickettsia sennetsu (strain ATCC VR-367 / Miyayama) (Ehrlichia sennetsu)).